The primary structure comprises 105 residues: Nitrogenase-stabilizing/protective protein NifW (105 aa).

It belongs to the NifW family. As to quaternary structure, homotrimer; associates with NifD.

In terms of biological role, may protect the nitrogenase Fe-Mo protein from oxidative damage. This Nostoc punctiforme (strain ATCC 29133 / PCC 73102) protein is Nitrogenase-stabilizing/protective protein NifW.